The primary structure comprises 222 residues: Protein CicA (222 aa).

The protein is Protein CicA (cicA) of Caulobacter vibrioides (strain ATCC 19089 / CIP 103742 / CB 15) (Caulobacter crescentus).